We begin with the raw amino-acid sequence, 276 residues long: MTWNATLALDYTRQAEKTVAHFRHSGPLRILQSLYPEGDGICHNVIVHPPGGLVGGDTLDLAFTAGAGAHGLVTTPGATRFYRSTGEPALQRTRLSLEAGARMEWLPLEAICYSGCLAENRLTMELASGAELIGWDVTAFGLPAASLPFAHGHFCQHIEMPGVWLERARIAAGDTLLMDSPLGLAGQRCMASIFFVAGSKLERNRRQQALDVAREVIEAHALRATAGATSPDGQVVVVRVLAPLVEPAMTLLRQVWQAWRSHFWQQPAALPRIWSM.

It belongs to the UreD family. In terms of assembly, ureD, UreF and UreG form a complex that acts as a GTP-hydrolysis-dependent molecular chaperone, activating the urease apoprotein by helping to assemble the nickel containing metallocenter of UreC. The UreE protein probably delivers the nickel.

Its subcellular location is the cytoplasm. Functionally, required for maturation of urease via the functional incorporation of the urease nickel metallocenter. The sequence is that of Urease accessory protein UreD from Polaromonas naphthalenivorans (strain CJ2).